A 149-amino-acid chain; its full sequence is 3-dehydroquinate dehydratase (149 aa).

Y26 acts as the Proton acceptor in catalysis. Substrate contacts are provided by N77, H83, and D90. H103 acts as the Proton donor in catalysis. Substrate is bound by residues 104–105 (LS) and R114.

This sequence belongs to the type-II 3-dehydroquinase family. In terms of assembly, homododecamer.

It carries out the reaction 3-dehydroquinate = 3-dehydroshikimate + H2O. The protein operates within metabolic intermediate biosynthesis; chorismate biosynthesis; chorismate from D-erythrose 4-phosphate and phosphoenolpyruvate: step 3/7. Catalyzes a trans-dehydration via an enolate intermediate. The sequence is that of 3-dehydroquinate dehydratase from Vibrio vulnificus (strain YJ016).